Here is a 434-residue protein sequence, read N- to C-terminus: Eukaryotic translation initiation factor 3 subunit E (434 aa).

Positions Phe219–Leu392 constitute a PCI domain.

This sequence belongs to the eIF-3 subunit E family. In terms of assembly, component of the eukaryotic translation initiation factor 3 (eIF-3) complex. The eIF-3 complex interacts with pix. Interacts with mxt.

The protein resides in the cytoplasm. In terms of biological role, component of the eukaryotic translation initiation factor 3 (eIF-3) complex, which is involved in protein synthesis of a specialized repertoire of mRNAs and, together with other initiation factors, stimulates binding of mRNA and methionyl-tRNAi to the 40S ribosome. The eIF-3 complex specifically targets and initiates translation of a subset of mRNAs involved in cell proliferation. The chain is Eukaryotic translation initiation factor 3 subunit E (eIF3-S6) from Drosophila virilis (Fruit fly).